Consider the following 563-residue polypeptide: MFSRNHRSRVTVARGSALEMEFKRGRFRLSLFSDLPEDTELQRKLDHEIRMREGACKLLAACSQREQALEATKSLLVCNSRILSYMGELQRRKEAQVLGKTSRRPSDSGPPAERSPCRGRVCISDLRIPLMWKDTEYFKNKGDLHRWAVFLLLQLGEHIQDTEMILVDRTLTDISFQSNVLFAEAGPDFELRLELYGACVEEEGALTGGPKRLATKLSSSLGRSSGRRVRASLDSAGGSGSSPILLPTPVVGGPRYHLLAHTTLTLAAVQDGFRTHDLTLASHEENPAWLPLYGSVCCRLAAQPLCMTQPTASGTLRVQQAGEMQNWAQVHGVLKGTNLFCYRQPEDADTGEEPLLTIAVNKETRVRAGELDQALGRPFTLSISNQYGDDEVTHTLQTESREALQSWMEALWQLFFDMSQWKQCCDEIMKIETPAPRKPPQALAKQGSLYHEMAIEPLDDIAAVTDILTQREGARLETPPPWLAMFTDQPALPNPCSPASVAPAPDWTHPLPWGRPRTFSLDAVPPDHSPRARSVAPLPPQRSPRTRGLCSKGQPRTWLQSPV.

Position 14 is an omega-N-methylarginine (arginine 14). One can recognise an REM-1 domain in the interval 17-98 (ALEMEFKRGR…LQRRKEAQVL (82 aa)). Serine 30 and serine 106 each carry phosphoserine. Residues 96 to 116 (QVLGKTSRRPSDSGPPAERSP) are disordered. Arginine 230 is subject to Asymmetric dimethylarginine. At serine 232 the chain carries Phosphoserine. In terms of domain architecture, PH spans 309–416 (QPTASGTLRV…WMEALWQLFF (108 aa)). The segment at 518–563 (TFSLDAVPPDHSPRARSVAPLPPQRSPRTRGLCSKGQPRTWLQSPV) is disordered. A phosphoserine mark is found at serine 520, serine 529, and serine 543.

In terms of assembly, interacts via its C-terminal region with the TAX1BP3 PDZ domain. This interaction facilitates Rho-mediated activation of the c-Fos serum response element (SRE). Interacts with SEPT9. Specifically binds to GTP-bound RHOA, RHOB and RHOC and inhibits their GTPase activity. In terms of tissue distribution, highly expressed in prostate, moderately in kidney, heart, brain, spleen, testis, placenta, small intestine, pancreas, skeletal muscle and peripheral blood leukocytes, and weakly in ovary, colon and thymus. Weakly expressed in all normal cell lines tested. Overexpressed in various cancer cell lines.

Mediates Rho signaling to activate NF-kappa-B and may confer increased resistance to apoptosis to cells in gastric tumorigenesis. May play a novel role in the organization of septin structures. The chain is Rhotekin from Homo sapiens (Human).